A 373-amino-acid chain; its full sequence is Cobalt-precorrin-5B C(1)-methyltransferase (373 aa).

This sequence belongs to the CbiD family.

The catalysed reaction is Co-precorrin-5B + S-adenosyl-L-methionine = Co-precorrin-6A + S-adenosyl-L-homocysteine. It participates in cofactor biosynthesis; adenosylcobalamin biosynthesis; cob(II)yrinate a,c-diamide from sirohydrochlorin (anaerobic route): step 6/10. Functionally, catalyzes the methylation of C-1 in cobalt-precorrin-5B to form cobalt-precorrin-6A. This Listeria monocytogenes serovar 1/2a (strain ATCC BAA-679 / EGD-e) protein is Cobalt-precorrin-5B C(1)-methyltransferase.